The sequence spans 60 residues: UPF0291 protein CTC_01690.1 (60 aa).

This sequence belongs to the UPF0291 family.

Its subcellular location is the cytoplasm. The protein is UPF0291 protein CTC_01690.1 of Clostridium tetani (strain Massachusetts / E88).